Here is a 114-residue protein sequence, read N- to C-terminus: UPF0342 protein SE_1526 (114 aa).

This sequence belongs to the UPF0342 family.

The polypeptide is UPF0342 protein SE_1526 (Staphylococcus epidermidis (strain ATCC 12228 / FDA PCI 1200)).